The primary structure comprises 105 residues: Small ribosomal subunit protein uS10c (105 aa).

Belongs to the universal ribosomal protein uS10 family. As to quaternary structure, part of the 30S ribosomal subunit.

Its subcellular location is the plastid. The protein resides in the chloroplast. Its function is as follows. Involved in the binding of tRNA to the ribosomes. The sequence is that of Small ribosomal subunit protein uS10c from Pyropia yezoensis (Susabi-nori).